Consider the following 172-residue polypeptide: Protein-export protein SecB (172 aa).

This sequence belongs to the SecB family. As to quaternary structure, homotetramer, a dimer of dimers. One homotetramer interacts with 1 SecA dimer.

The protein resides in the cytoplasm. Functionally, one of the proteins required for the normal export of preproteins out of the cell cytoplasm. It is a molecular chaperone that binds to a subset of precursor proteins, maintaining them in a translocation-competent state. It also specifically binds to its receptor SecA. The chain is Protein-export protein SecB from Xylella fastidiosa (strain Temecula1 / ATCC 700964).